Consider the following 202-residue polypeptide: Imidazoleglycerol-phosphate dehydratase (202 aa).

The protein belongs to the imidazoleglycerol-phosphate dehydratase family.

It localises to the cytoplasm. It catalyses the reaction D-erythro-1-(imidazol-4-yl)glycerol 3-phosphate = 3-(imidazol-4-yl)-2-oxopropyl phosphate + H2O. Its pathway is amino-acid biosynthesis; L-histidine biosynthesis; L-histidine from 5-phospho-alpha-D-ribose 1-diphosphate: step 6/9. The chain is Imidazoleglycerol-phosphate dehydratase from Corynebacterium efficiens (strain DSM 44549 / YS-314 / AJ 12310 / JCM 11189 / NBRC 100395).